A 118-amino-acid chain; its full sequence is Large ribosomal subunit protein bL17 (118 aa).

The protein belongs to the bacterial ribosomal protein bL17 family. Part of the 50S ribosomal subunit. Contacts protein L32.

In Phytoplasma australiense, this protein is Large ribosomal subunit protein bL17.